Consider the following 458-residue polypeptide: Peptidyl-prolyl cis-trans isomerase FKBP4 (458 aa).

N-acetylmethionine; in peptidyl-prolyl cis-trans isomerase FKBP4; alternate is present on M1. The disordered stretch occupies residues 1–24 (MTAEEMKAAENGAQSAPLPLEGVD). T2 bears the N-acetylthreonine; in peptidyl-prolyl cis-trans isomerase FKBP4, N-terminally processed; partial mark. Residues 50–138 (GDRVFVHYTG…VFEVELFEFK (89 aa)) form the PPIase FKBP-type 1 domain. T143 carries the phosphothreonine; by CK2 modification. The PPIase FKBP-type 2 domain occupies 167–253 (GAMVEVALEG…RYEVRLKSFE (87 aa)). Phosphotyrosine is present on Y220. An interaction with tubulin region spans residues 267 to 400 (LEQSNIVKER…TQLAVCQQRT (134 aa)). TPR repeat units lie at residues 270–303 (SNIV…LEYE), 319–352 (LASH…DSNN), and 353–386 (EKGL…YPSN). K282 bears the N6-acetyllysine mark. R373 carries the omega-N-methylarginine modification. The tract at residues 428–458 (EVAAGDHPTDAEMKGERNNVAENQSRVETEA) is disordered. Over residues 434–458 (HPTDAEMKGERNNVAENQSRVETEA) the composition is skewed to basic and acidic residues. The residue at position 436 (T436) is a Phosphothreonine. Residue K441 forms a Glycyl lysine isopeptide (Lys-Gly) (interchain with G-Cter in SUMO1) linkage. A Phosphoserine modification is found at S452.

In terms of assembly, homodimer. Interacts with GLMN. Associates with HSP90AA1 and HSPA1A/HSPA1B in steroid hormone receptor complexes. Also interacts with peroxisomal phytanoyl-CoA alpha-hydroxylase (PHYH). Interacts with NR3C1 and dynein. Interacts with HSF1 in the HSP90 complex. Associates with tubulin. Interacts with MAPT/TAU. Interacts (via TPR domain) with S100A1, S100A2 and S100A6; the interaction is Ca(2+) dependent. Interaction with S100A1 and S100A2 (but not with S100A6) leads to inhibition of FKBP4-HSP90 interaction. Interacts with dynein; contributes to NR3C1 transport to the nucleus. Post-translationally, phosphorylation by CK2 results in loss of HSP90 binding activity.

Its subcellular location is the cytoplasm. The protein localises to the cytosol. The protein resides in the mitochondrion. It localises to the nucleus. It is found in the cytoskeleton. The catalysed reaction is [protein]-peptidylproline (omega=180) = [protein]-peptidylproline (omega=0). Inhibited by FK506. Immunophilin protein with PPIase and co-chaperone activities. Component of steroid receptors heterocomplexes through interaction with heat-shock protein 90 (HSP90). May play a role in the intracellular trafficking of heterooligomeric forms of steroid hormone receptors between cytoplasm and nuclear compartments. The isomerase activity controls neuronal growth cones via regulation of TRPC1 channel opening. Also acts as a regulator of microtubule dynamics by inhibiting MAPT/TAU ability to promote microtubule assembly. May have a protective role against oxidative stress in mitochondria. This Mus musculus (Mouse) protein is Peptidyl-prolyl cis-trans isomerase FKBP4 (Fkbp4).